Reading from the N-terminus, the 194-residue chain is Large ribosomal subunit protein eL15 (194 aa).

Residues 164-194 are disordered; it reads SAGKKGRGLRNKGKGAEKVRPSVRANKGKTK. Residues 167 to 176 are compositionally biased toward basic residues; the sequence is KKGRGLRNKG.

This sequence belongs to the eukaryotic ribosomal protein eL15 family.

The chain is Large ribosomal subunit protein eL15 from Thermococcus gammatolerans (strain DSM 15229 / JCM 11827 / EJ3).